Consider the following 237-residue polypeptide: Ribose-5-phosphate isomerase A (237 aa).

Substrate contacts are provided by residues 33 to 36, 90 to 93, and 103 to 106; these read TGST, DGAD, and KGGG. Glutamate 112 serves as the catalytic Proton acceptor. A substrate-binding site is contributed by lysine 130.

This sequence belongs to the ribose 5-phosphate isomerase family. As to quaternary structure, homodimer.

The catalysed reaction is aldehydo-D-ribose 5-phosphate = D-ribulose 5-phosphate. The protein operates within carbohydrate degradation; pentose phosphate pathway; D-ribose 5-phosphate from D-ribulose 5-phosphate (non-oxidative stage): step 1/1. Its function is as follows. Catalyzes the reversible conversion of ribose-5-phosphate to ribulose 5-phosphate. The sequence is that of Ribose-5-phosphate isomerase A from Trichodesmium erythraeum (strain IMS101).